A 252-amino-acid polypeptide reads, in one-letter code: Phosphate import ATP-binding protein PstB (252 aa).

Residues 6–247 (ISAENLNLFY…PKDQRTEDYI (242 aa)) enclose the ABC transporter domain. 38-45 (GPSGCGKS) is an ATP binding site.

Belongs to the ABC transporter superfamily. Phosphate importer (TC 3.A.1.7) family. The complex is composed of two ATP-binding proteins (PstB), two transmembrane proteins (PstC and PstA) and a solute-binding protein (PstS).

The protein localises to the cell membrane. The catalysed reaction is phosphate(out) + ATP + H2O = ADP + 2 phosphate(in) + H(+). In terms of biological role, part of the ABC transporter complex PstSACB involved in phosphate import. Responsible for energy coupling to the transport system. The protein is Phosphate import ATP-binding protein PstB of Heliobacterium mobile (Heliobacillus mobilis).